The following is a 175-amino-acid chain: Large ribosomal subunit protein bL17m (175 aa).

The N-terminal 8 residues, 1–8 (MRLSVAAA), are a transit peptide targeting the mitochondrion. The segment at 155–175 (DLRQSQEASNHSSHTAQTPGI) is disordered. A compositionally biased stretch (polar residues) spans 161–175 (EASNHSSHTAQTPGI).

Belongs to the bacterial ribosomal protein bL17 family. In terms of assembly, component of the mitochondrial large ribosomal subunit (mt-LSU). Mature mammalian 55S mitochondrial ribosomes consist of a small (28S) and a large (39S) subunit. The 28S small subunit contains a 12S ribosomal RNA (12S mt-rRNA) and 30 different proteins. The 39S large subunit contains a 16S rRNA (16S mt-rRNA), a copy of mitochondrial valine transfer RNA (mt-tRNA(Val)), which plays an integral structural role, and 52 different proteins. In terms of tissue distribution, detected in adrenal gland, mammary gland and adipose tissue.

The protein resides in the mitochondrion. In Homo sapiens (Human), this protein is Large ribosomal subunit protein bL17m (MRPL17).